Here is a 434-residue protein sequence, read N- to C-terminus: Trehalose-phosphatase (434 aa).

Asp156 and Asp158 together coordinate Mg(2+). Asp158 acts as the Proton donor/acceptor in catalysis. Residue 275 to 277 (QKK) participates in substrate binding. Residue Asp366 participates in Mg(2+) binding.

Belongs to the gob-1 trehalose phosphatase family. It depends on Mg(2+) as a cofactor.

It catalyses the reaction alpha,alpha-trehalose 6-phosphate + H2O = alpha,alpha-trehalose + phosphate. Its function is as follows. Catalyzes the hydrolysis of trehalose 6-phosphate to trehalose and phosphate; prevents the accumulation of toxic levels of trehalose 6-phosphate. This Caenorhabditis briggsae protein is Trehalose-phosphatase (gob-1).